The primary structure comprises 81 residues: Large ribosomal subunit protein bL31B (81 aa).

This sequence belongs to the bacterial ribosomal protein bL31 family. Type B subfamily. As to quaternary structure, part of the 50S ribosomal subunit.

The chain is Large ribosomal subunit protein bL31B from Bacillus licheniformis (strain ATCC 14580 / DSM 13 / JCM 2505 / CCUG 7422 / NBRC 12200 / NCIMB 9375 / NCTC 10341 / NRRL NRS-1264 / Gibson 46).